The primary structure comprises 227 residues: General transcription factor 3C polypeptide 6 (227 aa).

Residues Asp-157 to Ser-227 are disordered. Basic and acidic residues predominate over residues Glu-186–Val-195. Over residues Glu-203–Ser-227 the composition is skewed to polar residues.

This sequence belongs to the TFIIIC subunit 6 family. In terms of assembly, part of the TFIIIC subcomplex TFIIIC2, consisting of six subunits, GTF3C1, GTF3C2, GTF3C3, GTF3C4, GTF3C5 and GTF3C6. Interacts with GTF3C4 and GTF3C5.

The protein localises to the nucleus. In terms of biological role, involved in RNA polymerase III-mediated transcription. Integral, tightly associated component of the DNA-binding TFIIIC2 subcomplex that directly binds tRNA and virus-associated RNA promoters. The sequence is that of General transcription factor 3C polypeptide 6 from Mus musculus (Mouse).